A 45-amino-acid polypeptide reads, in one-letter code: Large ribosomal subunit protein bL34 (45 aa).

The protein belongs to the bacterial ribosomal protein bL34 family.

This chain is Large ribosomal subunit protein bL34, found in Streptomyces avermitilis (strain ATCC 31267 / DSM 46492 / JCM 5070 / NBRC 14893 / NCIMB 12804 / NRRL 8165 / MA-4680).